Here is a 786-residue protein sequence, read N- to C-terminus: MNCRQFLSSHCSRDSSGGGGGSKMFSCNRSSFSGASGGGGRFSSSRSFGGGSSGACGRGGGGSFGSSYGGGSGGGFSAGSFGGHSRGFSGGSGGGFGGGFGGGFGGFSGGSGGGFGGPGGFGSGFDSGAGGILGADEKTTMQDLNSRLASYLDKVQALEDANKELESKIREWYDKQGSRTFHRDYSPYYDTIEDLKNQIVNITADNNKTLLDLDNTRMTLDDIRMKCDIENNLRLAVNADINGLRKVLDDLTMQKSDLEMHYESLQEELIALKKNHEDEMSQLTGQNSGDVNVEMNAAPGRDLTKILNDMREEYERISAKNRKDIEEQYETQMSQMEQEVMSSGQEMESNHKEVTQLRHSIQEMEIELQSQLSKKSALEKSLEDTKNHYCGQLQQLQEQIRSLEGQITEIRGEIECQNQEYSLLLNIKTRLEQEIKTYRSLLEGGQEDFESHESGQSHFGSGGSRQQGGIGGSHGRGSRGGSGGSYGGGSSSGGGSGGSHGGGSGGSYGGGSSSGGGSGGRGGSGGSYGGGSGSGGGSSGSYGGGSSSGGGSGGSHGGGSGGSYGGGSSSGGGSGGRGGSGGSYGGGSGSGGGRGGGCEEGSGSGGRSGGSYGGGSGSGGGSSCSYGGGSSSGGGSGGSYGGGSSSGGGSGGKGGSGCSYSGGSSSGGGSGGSYGGGSSSGRGSGGRGGSAGSYGGGSGSGGGRGGGCEEGSGSGGRSGGSYGGGSGSGGRSGGSYGGGSGSGGGSGGSYGGGSGSKGGSGRSSQVQSSSSKSGECDDTQGYHIQY.

The interval 1 to 21 (MNCRQFLSSHCSRDSSGGGGG) is disordered. The head stretch occupies residues 1-136 (MNCRQFLSSH…SGAGGILGAD (136 aa)). The residue at position 52 (S52) is a Phosphoserine. Positions 137-172 (EKTTMQDLNSRLASYLDKVQALEDANKELESKIREW) are coil 1A. Positions 137 to 449 (EKTTMQDLNS…SLLEGGQEDF (313 aa)) constitute an IF rod domain. A linker 1 region spans residues 173 to 191 (YDKQGSRTFHRDYSPYYDT). Positions 192 to 283 (IEDLKNQIVN…KNHEDEMSQL (92 aa)) are coil 1B. The segment at 284–306 (TGQNSGDVNVEMNAAPGRDLTKI) is linker 12. Residues 307 to 445 (LNDMREEYER…KTYRSLLEGG (139 aa)) are coil 2. Residues 446-760 (QEDFESHESG…GGGSGSKGGS (315 aa)) are tail. The tract at residues 447 to 786 (EDFESHESGQ…DDTQGYHIQY (340 aa)) is disordered. Gly residues-rich tracts occupy residues 460 to 657 (GSGG…GGSG) and 664 to 761 (SSSG…GGSG). The segment covering 762–773 (RSSQVQSSSSKS) has biased composition (low complexity).

This sequence belongs to the intermediate filament family. As to quaternary structure, heterotetramer of two type I and two type II keratins.

In terms of biological role, may serve an important special function either in the mature palmar and plantar skin tissue or in the morphogenetic program of the formation of these tissues. Plays a role in keratin filament assembly. This Canis lupus familiaris (Dog) protein is Keratin, type I cytoskeletal 9.